We begin with the raw amino-acid sequence, 137 residues long: Leaf-specific thionin DB4 (137 aa).

Residues 1 to 28 (MAPSKSIKSVVICVLILGLVLEQVQVEG) form the signal peptide. 4 cysteine pairs are disulfide-bonded: Cys31/Cys68, Cys32/Cys60, Cys40/Cys58, and Cys44/Cys54. Residues 75-137 (LNLLPESGEP…DGAVIQSVEA (63 aa)) constitute a propeptide, acidic domain.

The protein belongs to the plant thionin (TC 1.C.44) family. 4 C-C subfamily.

The protein localises to the secreted. Functionally, thionins are small plant proteins which are toxic to animal cells. They seem to exert their toxic effect at the level of the cell membrane. Their precise function is not known. This chain is Leaf-specific thionin DB4 (THI1.3), found in Hordeum vulgare (Barley).